Reading from the N-terminus, the 298-residue chain is Lipoyl synthase (298 aa).

Positions 40, 45, 51, 67, 71, 74, and 280 each coordinate [4Fe-4S] cluster. In terms of domain architecture, Radical SAM core spans 53–269; the sequence is AVRRTATFMI…KEIAMQKGFS (217 aa).

Belongs to the radical SAM superfamily. Lipoyl synthase family. It depends on [4Fe-4S] cluster as a cofactor.

Its subcellular location is the cytoplasm. The enzyme catalyses [[Fe-S] cluster scaffold protein carrying a second [4Fe-4S](2+) cluster] + N(6)-octanoyl-L-lysyl-[protein] + 2 oxidized [2Fe-2S]-[ferredoxin] + 2 S-adenosyl-L-methionine + 4 H(+) = [[Fe-S] cluster scaffold protein] + N(6)-[(R)-dihydrolipoyl]-L-lysyl-[protein] + 4 Fe(3+) + 2 hydrogen sulfide + 2 5'-deoxyadenosine + 2 L-methionine + 2 reduced [2Fe-2S]-[ferredoxin]. It participates in protein modification; protein lipoylation via endogenous pathway; protein N(6)-(lipoyl)lysine from octanoyl-[acyl-carrier-protein]. In terms of biological role, catalyzes the radical-mediated insertion of two sulfur atoms into the C-6 and C-8 positions of the octanoyl moiety bound to the lipoyl domains of lipoate-dependent enzymes, thereby converting the octanoylated domains into lipoylated derivatives. The sequence is that of Lipoyl synthase from Bacillus subtilis (strain 168).